Here is a 295-residue protein sequence, read N- to C-terminus: Proline iminopeptidase (295 aa).

The AB hydrolase-1 domain maps to 35 to 279 (TLHGGPGMSH…ACSHLTMWED (245 aa)). Catalysis depends on Ser107, which acts as the Nucleophile. Asp246 is an active-site residue. The active-site Proton donor is His273.

The protein belongs to the peptidase S33 family. Part of the tricorn proteolytic complex.

The enzyme catalyses Release of N-terminal proline from a peptide.. Cleaves H-Pro-AMC as well as a wide spectrum of amino acid substrates and several peptide substrates without a proline at the N-terminus. In conjunction with the three factors F1, F2 and F3, Tricorn degrades oligopeptides in a sequential manner, yielding free amino acids. The sequence is that of Proline iminopeptidase (pip) from Thermoplasma volcanium (strain ATCC 51530 / DSM 4299 / JCM 9571 / NBRC 15438 / GSS1).